Here is a 914-residue protein sequence, read N- to C-terminus: Probable UDP-N-acetylglucosamine--peptide N-acetylglucosaminyltransferase SPINDLY (914 aa).

The interval 1-39 (MVGLEDDTERERSPVVENGFSNGSRSSSSSAGVLSPSRK) is disordered. Residues 19 to 37 (GFSNGSRSSSSSAGVLSPS) show a composition bias toward low complexity. Phosphoserine is present on Ser-35. 11 TPR repeats span residues 43–76 (GNDTLSYANILRARNKFADALALYEAMLEKDSKN), 77–110 (VEAHIGKGICLQTQNKGNLAFDCFSEAIRLDPHN), 112–144 (CALTHCGILHKEEGRLVEAAESYQKALMADASY), 152–185 (AIVLTDLGTSLKLAGNTQEGIQKYYEALKIDPHY), 186–219 (APAYYNLGVVYSEMMQYDNALSCYEKAALERPMY), 220–253 (AEAYCNMGVIYKNRGDLEMAITCYERCLAVSPNF), 261–294 (AIALTDLGTKVKLEGDVTQGVAYYKKALYYNWHY), 295–328 (ADAMYNLGVAYGEMLKFDMAIVFYELAFHFNPHC), 329–362 (AEACNNLGVLYKDRDNLDKAVECYQMALSIKPNF), 364–396 (QSLNNLGVVYTVQGKMDAAASMIEKAILANPTY), and 397–430 (AEAFNNLGVLYRDAGNITMAIDAYEECLKIDPDS). Residues 431 to 914 (RNAGQNRLLA…QLSKRMDSTS (484 aa)) are catalytic region. The tract at residues 866–914 (PLISKDLGPSRVSVTGEATPSLKANGSAPVPSSLPTQSPQLSKRMDSTS) is disordered. Residues 877–889 (VSVTGEATPSLKA) are compositionally biased toward polar residues. Over residues 894–907 (PVPSSLPTQSPQLS) the composition is skewed to low complexity.

It belongs to the glycosyltransferase 41 family. O-GlcNAc transferase subfamily. As to quaternary structure, homomultimer; via its TPR repeats. Interacts with GI. Interacts with TCP14 and TCP15. Interacts (via N-terminus) with APRR5. Interacts with CPN20. As to expression, widely expressed. Present throughout the plant (at protein level).

The protein localises to the cytoplasm. Its subcellular location is the nucleus. It catalyses the reaction L-seryl-[protein] + UDP-N-acetyl-alpha-D-glucosamine = 3-O-(N-acetyl-beta-D-glucosaminyl)-L-seryl-[protein] + UDP + H(+). The catalysed reaction is L-threonyl-[protein] + UDP-N-acetyl-alpha-D-glucosamine = 3-O-(N-acetyl-beta-D-glucosaminyl)-L-threonyl-[protein] + UDP + H(+). The enzyme catalyses L-seryl-[protein] + GDP-beta-L-fucose = 3-O-(alpha-L-fucosyl)-L-seryl-[protein] + GDP + H(+). It carries out the reaction L-threonyl-[protein] + GDP-beta-L-fucose = 3-O-(alpha-L-fucosyl)-L-threonyl-[protein] + GDP + H(+). It functions in the pathway protein modification; protein glycosylation. In terms of biological role, probable O-linked N-acetylglucosamine transferase (OGT) involved in various processes such as gibberellin (GA) signaling pathway and circadian clock. OGTs catalyze the addition of nucleotide-activated sugars directly onto the polypeptide through O-glycosidic linkage with the hydroxyl of serine or threonine. Probably acts by adding O-linked sugars to yet unknown proteins. Acts as a repressor of GA signaling pathway to inhibit hypocotyl elongation. Functions with GIGANTEA (GI) in pathways controlling flowering, circadian cotyledon movements and hypocotyl elongation. Acts as a light-regulated promoter of elongation via its interaction with GI. Acts as an activator of cytokinin signaling. Required with SEC for gamete and seed development. Its OGT activity has been proved in vitro but not in vivo. Possesses O-fucosyltransferase activity on specific serine and threonine residues. Mediates O-fucosylation of the DELLA protein RGA, a repressor of the GA signaling pathway. O-fucosylation enhances RGA activity by promoting RGA binding to key transcription factors in brassinosteroid and light-signaling pathways. Regulates root hair patterning upstream of the transcription factor WER, independently of DELLA proteins and GA signaling. Involved in abscisic acid (ABA) signaling partly through functional ABAR. Mediates O-fucosylation of CPN20 that may depress ABA responses during seed germination and seedling development. Involved in the modulation of the pace of the circadian clock by mediating O-fucosylation of APRR5, one of the core circadian clock components. O-fucosylation promotes APRR5 proteolysis. This is Probable UDP-N-acetylglucosamine--peptide N-acetylglucosaminyltransferase SPINDLY from Arabidopsis thaliana (Mouse-ear cress).